The sequence spans 320 residues: Malate dehydrogenase (320 aa).

Residues 10-15 and Asp34 each bind NAD(+); that span reads GAGQIG. Residues Arg83 and Arg89 each contribute to the substrate site. NAD(+) contacts are provided by residues Asn96 and 119 to 121; that span reads ITN. Residues Asn121 and Arg152 each contribute to the substrate site. His176 serves as the catalytic Proton acceptor.

This sequence belongs to the LDH/MDH superfamily. MDH type 3 family.

It carries out the reaction (S)-malate + NAD(+) = oxaloacetate + NADH + H(+). Functionally, catalyzes the reversible oxidation of malate to oxaloacetate. The polypeptide is Malate dehydrogenase (Roseobacter denitrificans (strain ATCC 33942 / OCh 114) (Erythrobacter sp. (strain OCh 114))).